Here is a 666-residue protein sequence, read N- to C-terminus: SNARE-interacting protein KEULE (666 aa).

The stretch at 340 to 377 (KNKAAQLQGKRDGAELSTRDLQKMVQALPQYSEQIDKL) forms a coiled coil. Positions 534 to 589 (KEDFPCMNDPSPSFHGSTSLSSAASSSQGQAAQSMRSRRTPTWAKPRGSDDGYSSD) are disordered. Residues 550 to 568 (STSLSSAASSSQGQAAQSM) show a composition bias toward low complexity.

The protein belongs to the STXBP/unc-18/SEC1 family. In terms of assembly, binds the syntaxin KNOLLE. Interacts with SEC6. In terms of tissue distribution, expressed throughout the plant, both in mitotically active and quiescent cells. Enriched in dividing tissues.

It localises to the cytoplasm. It is found in the membrane. Its subcellular location is the cytoskeleton. The protein localises to the phragmoplast. Its function is as follows. Regulator of vesicle trafficking involved in cytokinesis and root hair development, but not required for cell elongation. This chain is SNARE-interacting protein KEULE (KEU), found in Arabidopsis thaliana (Mouse-ear cress).